Here is a 101-residue protein sequence, read N- to C-terminus: Interleukin-8 (101 aa).

The first 22 residues, Met-1–Gly-22, serve as a signal peptide directing secretion. The residue at position 27 (Arg-27) is a Citrulline. 2 disulfide bridges follow: Cys-34-Cys-61 and Cys-36-Cys-77.

This sequence belongs to the intercrine alpha (chemokine CxC) family. As to quaternary structure, homodimer. Interacts with TNFAIP6 (via Link domain); this interaction interferes with chemokine binding to glycosaminoglycans. Post-translationally, citrullination at Arg-27 prevents proteolysis, and dampens tissue inflammation, it also enhances leukocytosis, possibly through impaired chemokine clearance from the blood circulation.

It is found in the secreted. Chemotactic factor that mediates inflammatory response by attracting neutrophils, basophils, and T-cells to clear pathogens and protect the host from infection. Also plays an important role in neutrophil activation. Released in response to an inflammatory stimulus, exerts its effect by binding to the G-protein-coupled receptors CXCR1 and CXCR2, primarily found in neutrophils, monocytes and endothelial cells. G-protein heterotrimer (alpha, beta, gamma subunits) constitutively binds to CXCR1/CXCR2 receptor and activation by IL8 leads to beta and gamma subunits release from Galpha (GNAI2 in neutrophils) and activation of several downstream signaling pathways including PI3K and MAPK pathways. This is Interleukin-8 (CXCL8) from Cercocebus atys (Sooty mangabey).